A 416-amino-acid polypeptide reads, in one-letter code: MFQDVLVITVAAGRGGDGAVSFRREKFVPKGGPDGGDGGRGGSVYLRARGSVDSLSRLSKRTYKAEDGEHGRGSQQHGRGGEDLVIEVPRGTRVFDADTGELLADLTEEGQTVLVARGGAGGRGNMHFVTPTRQAPRFAEAGEEGEKRRLRLELMLIADVGLVGYPNAGKSSLLAAMTRAHPKIAPYPFTTLSPNLGVVEVSEEERFTLADIPGIIEGASEGKGLGLEFLRHIARTRVLLYVLDAADEPLKTLETLRKEVGAYDPALLRRPSLVALNKVDLLEEEAVKALADALAREGLAVLPVSALTGVGLPALKEALHALVRSTPPPEMPKPVPRKEVQAGVEVVPVAEGVYEVRAPEVERYLARIKGDLMEAAGYLQEVFRRQGVEAALRAKGVRAGDLVRIGGLEFEYIPEV.

Residues 1–157 (MFQDVLVITV…RRLRLELMLI (157 aa)) form the Obg domain. Disordered stretches follow at residues 25 to 44 (EKFVPKGGPDGGDGGRGGSV) and 62 to 82 (TYKAEDGEHGRGSQQHGRGGE). Residues 32–42 (GPDGGDGGRGG) show a composition bias toward gly residues. Residues 63 to 72 (YKAEDGEHGR) show a composition bias toward basic and acidic residues. Positions 158–324 (ADVGLVGYPN…LKEALHALVR (167 aa)) constitute an OBG-type G domain. Residues 164–171 (GYPNAGKS), 189–193 (FTTLS), 211–214 (DIPG), 277–280 (NKVD), and 305–307 (SAL) each bind GTP. 2 residues coordinate Mg(2+): Ser171 and Thr191. Positions 336–414 (PRKEVQAGVE…IGGLEFEYIP (79 aa)) constitute an OCT domain.

The protein belongs to the TRAFAC class OBG-HflX-like GTPase superfamily. OBG GTPase family. In terms of assembly, monomer. Mg(2+) is required as a cofactor.

The protein resides in the cytoplasm. Its function is as follows. An essential GTPase which binds GTP, GDP and possibly (p)ppGpp with moderate affinity, with high nucleotide exchange rates and a fairly low GTP hydrolysis rate. Plays a role in control of the cell cycle, stress response, ribosome biogenesis and in those bacteria that undergo differentiation, in morphogenesis control. The chain is GTPase Obg from Thermus thermophilus (strain ATCC BAA-163 / DSM 7039 / HB27).